Consider the following 674-residue polypeptide: Probable L-type lectin-domain containing receptor kinase I.5 (674 aa).

An N-terminal signal peptide occupies residues 1 to 22; that stretch reads MSKGLFLIWLISSFHLISFSTS. Residues 23–286 are Extracellular-facing; that stretch reads SKDTSFVFNG…RPRAEHKKVQ (264 aa). The legume-lectin like stretch occupies residues 25-258; that stretch reads DTSFVFNGFG…YHYLLGWSFS (234 aa). N-linked (GlcNAc...) asparagine glycans are attached at residues asparagine 124, asparagine 181, asparagine 185, asparagine 204, and asparagine 225. A helical membrane pass occupies residues 287-307; it reads FALIIALPVILAIVVMAVLAG. Over 308 to 674 the chain is Cytoplasmic; sequence VYYHRKKKYA…DHEQPLEFKS (367 aa). One can recognise a Protein kinase domain in the interval 344–625; sequence FHKDRFLGRG…LPLPDFSPYT (282 aa). ATP contacts are provided by residues 350 to 358 and lysine 372; that span reads LGRGGFGEV. Aspartate 468 serves as the catalytic Proton acceptor. The segment covering 649 to 662 has biased composition (low complexity); it reads NWSAPSASSSSANN. The tract at residues 649–674 is disordered; sequence NWSAPSASSSSANNSKDHEQPLEFKS. The segment covering 663 to 674 has biased composition (basic and acidic residues); that stretch reads SKDHEQPLEFKS.

This sequence in the C-terminal section; belongs to the protein kinase superfamily. Ser/Thr protein kinase family. It in the N-terminal section; belongs to the leguminous lectin family.

It is found in the cell membrane. It catalyses the reaction L-seryl-[protein] + ATP = O-phospho-L-seryl-[protein] + ADP + H(+). It carries out the reaction L-threonyl-[protein] + ATP = O-phospho-L-threonyl-[protein] + ADP + H(+). This is Probable L-type lectin-domain containing receptor kinase I.5 (LECRK15) from Arabidopsis thaliana (Mouse-ear cress).